The following is a 151-amino-acid chain: Dehydrin Rab16D (151 aa).

Residues 1 to 138 (MEYQGQHGGH…TADAGGEKKG (138 aa)) form a disordered region. Residues 39-51 (EPAREDKKTDGVL) are compositionally biased toward basic and acidic residues. Composition is skewed to low complexity over residues 90–105 (GNNQ…TTTG) and 117–132 (IATG…TADA).

This sequence belongs to the plant dehydrin family.

The chain is Dehydrin Rab16D (RAB16D) from Oryza sativa subsp. indica (Rice).